A 394-amino-acid chain; its full sequence is Phosphoglycerate kinase (394 aa).

Substrate-binding positions include 21-23, R36, 59-62, R118, and R151; these read DFN and HLGR. S183 carries the phosphoserine modification. K201 serves as a coordination point for ATP. T299 bears the Phosphothreonine mark. ATP-binding positions include E323 and 350-353; that span reads GGDS.

The protein belongs to the phosphoglycerate kinase family. As to quaternary structure, monomer.

It localises to the cytoplasm. The catalysed reaction is (2R)-3-phosphoglycerate + ATP = (2R)-3-phospho-glyceroyl phosphate + ADP. It functions in the pathway carbohydrate degradation; glycolysis; pyruvate from D-glyceraldehyde 3-phosphate: step 2/5. The polypeptide is Phosphoglycerate kinase (Geobacillus sp. (strain WCH70)).